The primary structure comprises 287 residues: Protease HtpX (287 aa).

A run of 2 helical transmembrane segments spans residues 4 to 24 (IFLL…VMSI) and 33 to 53 (GGLL…SLAI). Position 139 (His-139) interacts with Zn(2+). Glu-140 is a catalytic residue. His-143 contributes to the Zn(2+) binding site. 2 helical membrane passes run 154–174 (LIQG…AGII) and 195–215 (AVVF…VAYF). Residue Glu-220 participates in Zn(2+) binding.

The protein belongs to the peptidase M48B family. Requires Zn(2+) as cofactor.

Its subcellular location is the cell inner membrane. This is Protease HtpX from Shewanella halifaxensis (strain HAW-EB4).